A 324-amino-acid chain; its full sequence is Elongation factor P--(R)-beta-lysine ligase (324 aa).

75–77 (SPE) contributes to the substrate binding site. Residues 99–101 (RNK) and asparagine 108 contribute to the ATP site. Tyrosine 117 contacts substrate. 243-244 (EL) is an ATP binding site. Glutamate 250 provides a ligand contact to substrate. Residue glycine 299 participates in ATP binding.

The protein belongs to the class-II aminoacyl-tRNA synthetase family. EpmA subfamily. Homodimer.

The catalysed reaction is D-beta-lysine + L-lysyl-[protein] + ATP = N(6)-((3R)-3,6-diaminohexanoyl)-L-lysyl-[protein] + AMP + diphosphate + H(+). Functionally, with EpmB is involved in the beta-lysylation step of the post-translational modification of translation elongation factor P (EF-P). Catalyzes the ATP-dependent activation of (R)-beta-lysine produced by EpmB, forming a lysyl-adenylate, from which the beta-lysyl moiety is then transferred to the epsilon-amino group of a conserved specific lysine residue in EF-P. The protein is Elongation factor P--(R)-beta-lysine ligase of Buchnera aphidicola subsp. Acyrthosiphon pisum (strain APS) (Acyrthosiphon pisum symbiotic bacterium).